Reading from the N-terminus, the 736-residue chain is Phosphoribosylformylglycinamidine synthase subunit PurL (736 aa).

H49 is a catalytic residue. Residues Y52 and K91 each coordinate ATP. E93 serves as a coordination point for Mg(2+). Residues 94 to 97 and R116 each bind substrate; that span reads SHNH. H95 functions as the Proton acceptor in the catalytic mechanism. D117 is a binding site for Mg(2+). Q240 contributes to the substrate binding site. A Mg(2+)-binding site is contributed by D268. Substrate is bound at residue 312–314; the sequence is ESQ. ATP contacts are provided by D493 and G530. N531 provides a ligand contact to Mg(2+). S533 is a binding site for substrate.

The protein belongs to the FGAMS family. Monomer. Part of the FGAM synthase complex composed of 1 PurL, 1 PurQ and 2 PurS subunits.

The protein localises to the cytoplasm. The catalysed reaction is N(2)-formyl-N(1)-(5-phospho-beta-D-ribosyl)glycinamide + L-glutamine + ATP + H2O = 2-formamido-N(1)-(5-O-phospho-beta-D-ribosyl)acetamidine + L-glutamate + ADP + phosphate + H(+). Its pathway is purine metabolism; IMP biosynthesis via de novo pathway; 5-amino-1-(5-phospho-D-ribosyl)imidazole from N(2)-formyl-N(1)-(5-phospho-D-ribosyl)glycinamide: step 1/2. Functionally, part of the phosphoribosylformylglycinamidine synthase complex involved in the purines biosynthetic pathway. Catalyzes the ATP-dependent conversion of formylglycinamide ribonucleotide (FGAR) and glutamine to yield formylglycinamidine ribonucleotide (FGAM) and glutamate. The FGAM synthase complex is composed of three subunits. PurQ produces an ammonia molecule by converting glutamine to glutamate. PurL transfers the ammonia molecule to FGAR to form FGAM in an ATP-dependent manner. PurS interacts with PurQ and PurL and is thought to assist in the transfer of the ammonia molecule from PurQ to PurL. The protein is Phosphoribosylformylglycinamidine synthase subunit PurL of Rhodopseudomonas palustris (strain HaA2).